Consider the following 242-residue polypeptide: DNA repair protein RecO (242 aa).

This sequence belongs to the RecO family. As to quaternary structure, monomer.

Its function is as follows. Involved in DNA repair and RecF pathway recombination. This Shigella boydii serotype 18 (strain CDC 3083-94 / BS512) protein is DNA repair protein RecO.